The chain runs to 436 residues: Chorismate synthase, chloroplastic (436 aa).

Positions M1–S24 are disordered. The N-terminal 50 residues, M1–A50, are a transit peptide targeting the chloroplast.

The protein belongs to the chorismate synthase family. Homotetramer. The cofactor is FMNH2.

The protein localises to the plastid. The protein resides in the chloroplast. The enzyme catalyses 5-O-(1-carboxyvinyl)-3-phosphoshikimate = chorismate + phosphate. The protein operates within metabolic intermediate biosynthesis; chorismate biosynthesis; chorismate from D-erythrose 4-phosphate and phosphoenolpyruvate: step 7/7. Its function is as follows. Catalyzes the last common step of the biosynthesis of aromatic amino acids, produced via the shikimic acid pathway. The protein is Chorismate synthase, chloroplastic (EMB1144) of Arabidopsis thaliana (Mouse-ear cress).